The chain runs to 210 residues: Thymidylate kinase (210 aa).

10–17 provides a ligand contact to ATP; it reads GIDGCGKT.

The protein belongs to the thymidylate kinase family.

The catalysed reaction is dTMP + ATP = dTDP + ADP. Functionally, phosphorylation of dTMP to form dTDP in both de novo and salvage pathways of dTTP synthesis. The sequence is that of Thymidylate kinase from Prochlorococcus marinus (strain MIT 9515).